We begin with the raw amino-acid sequence, 472 residues long: D-inositol 3-phosphate glycosyltransferase (472 aa).

Histidine 48 is a 1D-myo-inositol 3-phosphate binding site. UDP-N-acetyl-alpha-D-glucosamine is bound by residues 54-55 (QP) and glycine 62. Residues 59–64 (DAGGMN), lysine 117, tyrosine 150, threonine 174, and arginine 194 contribute to the 1D-myo-inositol 3-phosphate site. 3 residues coordinate UDP-N-acetyl-alpha-D-glucosamine: arginine 282, lysine 287, and valine 348. Residues phenylalanine 357, arginine 358, and alanine 360 each contribute to the Mg(2+) site. UDP-N-acetyl-alpha-D-glucosamine is bound by residues glutamate 370 and glutamate 378. A Mg(2+)-binding site is contributed by threonine 384.

This sequence belongs to the glycosyltransferase group 1 family. MshA subfamily. As to quaternary structure, homodimer.

The enzyme catalyses 1D-myo-inositol 3-phosphate + UDP-N-acetyl-alpha-D-glucosamine = 1D-myo-inositol 2-acetamido-2-deoxy-alpha-D-glucopyranoside 3-phosphate + UDP + H(+). Functionally, catalyzes the transfer of a N-acetyl-glucosamine moiety to 1D-myo-inositol 3-phosphate to produce 1D-myo-inositol 2-acetamido-2-deoxy-glucopyranoside 3-phosphate in the mycothiol biosynthesis pathway. This chain is D-inositol 3-phosphate glycosyltransferase, found in Streptomyces griseus subsp. griseus (strain JCM 4626 / CBS 651.72 / NBRC 13350 / KCC S-0626 / ISP 5235).